Here is a 163-residue protein sequence, read N- to C-terminus: Nucleotide-binding protein NFA_51200 (163 aa).

Belongs to the YajQ family.

In terms of biological role, nucleotide-binding protein. In Nocardia farcinica (strain IFM 10152), this protein is Nucleotide-binding protein NFA_51200.